Consider the following 371-residue polypeptide: Cytochrome b (371 aa).

4 consecutive transmembrane segments (helical) span residues 25-45 (FGSM…FLAV), 69-90 (WMMQ…YIHI), 105-125 (WMSG…GYIL), and 170-190 (FFAL…LHIL). His75 and His89 together coordinate heme b. Residues His174 and His188 each coordinate heme b. Residue His193 coordinates a ubiquinone. The next 4 helical transmembrane spans lie at 218-238 (YKDL…TFFL), 280-300 (LGGA…PFTH), 312-332 (MSQL…WAAT), and 339-358 (FMMI…ISNP).

This sequence belongs to the cytochrome b family. The cytochrome bc1 complex contains 3 respiratory subunits (MT-CYB, CYC1 and UQCRFS1), 2 core proteins (UQCRC1 and UQCRC2) and probably 6 low-molecular weight proteins. Heme b serves as cofactor.

The protein localises to the mitochondrion inner membrane. Component of the ubiquinol-cytochrome c reductase complex (complex III or cytochrome b-c1 complex) that is part of the mitochondrial respiratory chain. The b-c1 complex mediates electron transfer from ubiquinol to cytochrome c. Contributes to the generation of a proton gradient across the mitochondrial membrane that is then used for ATP synthesis. The protein is Cytochrome b (MT-CYB) of Casarea dussumieri (Round Island keel-scaled boa).